The following is a 169-amino-acid chain: Large ribosomal subunit protein uL10 (169 aa).

Belongs to the universal ribosomal protein uL10 family. In terms of assembly, part of the ribosomal stalk of the 50S ribosomal subunit. The N-terminus interacts with L11 and the large rRNA to form the base of the stalk. The C-terminus forms an elongated spine to which L12 dimers bind in a sequential fashion forming a multimeric L10(L12)X complex.

In terms of biological role, forms part of the ribosomal stalk, playing a central role in the interaction of the ribosome with GTP-bound translation factors. The protein is Large ribosomal subunit protein uL10 of Rickettsia felis (strain ATCC VR-1525 / URRWXCal2) (Rickettsia azadi).